The sequence spans 238 residues: Probable transcriptional regulatory protein CTA_0499 (238 aa).

Positions 1–21 (MAGHSKWANTKHRKERADHKK) are disordered. Residues 9-21 (NTKHRKERADHKK) are compositionally biased toward basic residues.

Belongs to the TACO1 family.

It is found in the cytoplasm. This Chlamydia trachomatis serovar A (strain ATCC VR-571B / DSM 19440 / HAR-13) protein is Probable transcriptional regulatory protein CTA_0499.